The chain runs to 386 residues: uncharacterized protein (386 aa).

A run of 9 helical transmembrane segments spans residues 48-68 (NLITLIGLGFVVINILTMLVY), 78-98 (PSWVYASWAIGLFLYQSFDAI), 136-156 (LQLDMFSSILTQFASLLYFYI), 171-191 (YFSGPVEGIVMVIGLFALTAI), 213-233 (FLPYYTYGSCLYNFMAFALLL), 253-273 (VIKALSGILPYFLQWMAVFSL), 285-305 (FLTIFCLNAFIFAYSVGVVIV), 316-336 (WNVLILPFLVDAVDAYTFGVL), and 344-364 (FFCYVGICIGVYGNFVAHVIA).

Belongs to the CDP-alcohol phosphatidyltransferase class-I family.

The protein localises to the membrane. This is an uncharacterized protein from Schizosaccharomyces pombe (strain 972 / ATCC 24843) (Fission yeast).